We begin with the raw amino-acid sequence, 91 residues long: Elongation factor 1-beta (91 aa).

It belongs to the EF-1-beta/EF-1-delta family.

In terms of biological role, promotes the exchange of GDP for GTP in EF-1-alpha/GDP, thus allowing the regeneration of EF-1-alpha/GTP that could then be used to form the ternary complex EF-1-alpha/GTP/AAtRNA. The protein is Elongation factor 1-beta of Thermococcus kodakarensis (strain ATCC BAA-918 / JCM 12380 / KOD1) (Pyrococcus kodakaraensis (strain KOD1)).